Reading from the N-terminus, the 580-residue chain is CDKN2A-interacting protein (580 aa).

Position 2 is an N-acetylalanine (A2). One can recognise an XRN2-binding (XTBD) domain in the interval 19 to 133 (VEALRCDGET…KVKKRGISSS (115 aa)). Residues 129–356 (GISSSNEGVE…PKSSSSTNTS (228 aa)) form a disordered region. At S131 the chain carries Phosphoserine. Positions 155–167 (EQDHAKTSAKTER) are enriched in basic and acidic residues. The span at 168–179 (ASAQQENSSTCI) shows a compositional bias: polar residues. K184 is covalently cross-linked (Glycyl lysine isopeptide (Lys-Gly) (interchain with G-Cter in SUMO1)). The span at 185 to 228 (SESGNSARSSGISSQNSSTSDGDRSVSSQSSSSVSSQVTTAGSG) shows a compositional bias: low complexity. Over residues 231-240 (SEAEAPDKHG) the composition is skewed to basic and acidic residues. S241 is subject to Phosphoserine. The span at 248–269 (LKSSVNSHMTQSTDSRQQSGSP) shows a compositional bias: polar residues. Low complexity-rich tracts occupy residues 274–313 (LEGS…PSSE) and 321–356 (SKTS…TNTS). T346 bears the Phosphothreonine mark. S389 carries the phosphoserine modification. The region spanning 462 to 537 (NHGELLNAAI…SREALKLFLK (76 aa)) is the DRBM domain.

It belongs to the CARF family. As to quaternary structure, interacts with CDKN2A/p14ARF, p53/TP53 and MDM2. Interacts with CHEK2 and MAPK3. Interacts with XRN2. Post-translationally, may be ubiquitinated. Ubiquitously expressed.

The protein resides in the nucleus. It is found in the nucleoplasm. Functionally, regulates DNA damage response in a dose-dependent manner through a number of signaling pathways involved in cell proliferation, apoptosis and senescence. The sequence is that of CDKN2A-interacting protein (CDKN2AIP) from Homo sapiens (Human).